A 62-amino-acid chain; its full sequence is Large ribosomal subunit protein bL33 (62 aa).

Belongs to the bacterial ribosomal protein bL33 family.

In Bacteroides fragilis (strain ATCC 25285 / DSM 2151 / CCUG 4856 / JCM 11019 / LMG 10263 / NCTC 9343 / Onslow / VPI 2553 / EN-2), this protein is Large ribosomal subunit protein bL33.